The primary structure comprises 321 residues: Lipoyl synthase (321 aa).

7 residues coordinate [4Fe-4S] cluster: Cys68, Cys73, Cys79, Cys94, Cys98, Cys101, and Ser308. The Radical SAM core domain occupies 80 to 297 (FNHGTATFMI…KAEALAMGFT (218 aa)).

The protein belongs to the radical SAM superfamily. Lipoyl synthase family. [4Fe-4S] cluster serves as cofactor.

It localises to the cytoplasm. It carries out the reaction [[Fe-S] cluster scaffold protein carrying a second [4Fe-4S](2+) cluster] + N(6)-octanoyl-L-lysyl-[protein] + 2 oxidized [2Fe-2S]-[ferredoxin] + 2 S-adenosyl-L-methionine + 4 H(+) = [[Fe-S] cluster scaffold protein] + N(6)-[(R)-dihydrolipoyl]-L-lysyl-[protein] + 4 Fe(3+) + 2 hydrogen sulfide + 2 5'-deoxyadenosine + 2 L-methionine + 2 reduced [2Fe-2S]-[ferredoxin]. Its pathway is protein modification; protein lipoylation via endogenous pathway; protein N(6)-(lipoyl)lysine from octanoyl-[acyl-carrier-protein]: step 2/2. Its function is as follows. Catalyzes the radical-mediated insertion of two sulfur atoms into the C-6 and C-8 positions of the octanoyl moiety bound to the lipoyl domains of lipoate-dependent enzymes, thereby converting the octanoylated domains into lipoylated derivatives. In Escherichia fergusonii (strain ATCC 35469 / DSM 13698 / CCUG 18766 / IAM 14443 / JCM 21226 / LMG 7866 / NBRC 102419 / NCTC 12128 / CDC 0568-73), this protein is Lipoyl synthase.